The sequence spans 210 residues: Redox-sensing transcriptional repressor Rex (210 aa).

Positions 17–56 (KYHRYLYELLKNDVDRISSKELSEKIGFTASQIRQDLNCF) form a DNA-binding region, H-T-H motif. Residue 91–96 (GAGNIG) coordinates NAD(+).

The protein belongs to the transcriptional regulatory Rex family. As to quaternary structure, homodimer.

It is found in the cytoplasm. Functionally, modulates transcription in response to changes in cellular NADH/NAD(+) redox state. The polypeptide is Redox-sensing transcriptional repressor Rex (Clostridium botulinum (strain Loch Maree / Type A3)).